The primary structure comprises 727 residues: 1,4-alpha-glucan branching enzyme GlgB (727 aa).

The active-site Nucleophile is Asp405. The active-site Proton donor is Glu458.

This sequence belongs to the glycosyl hydrolase 13 family. GlgB subfamily. As to quaternary structure, monomer.

It carries out the reaction Transfers a segment of a (1-&gt;4)-alpha-D-glucan chain to a primary hydroxy group in a similar glucan chain.. It participates in glycan biosynthesis; glycogen biosynthesis. Functionally, catalyzes the formation of the alpha-1,6-glucosidic linkages in glycogen by scission of a 1,4-alpha-linked oligosaccharide from growing alpha-1,4-glucan chains and the subsequent attachment of the oligosaccharide to the alpha-1,6 position. In Yersinia pseudotuberculosis serotype O:1b (strain IP 31758), this protein is 1,4-alpha-glucan branching enzyme GlgB.